The following is a 372-amino-acid chain: D-alanine--D-alanine ligase (372 aa).

One can recognise an ATP-grasp domain in the interval 145-349 (KTVLRAGGIP…CPNLLDQLIE (205 aa)). 176–231 (DRWGTSELFVKAVSLGSSVATLPVKTETEFTKAVKEVFRYDDRLMVEPRIRGREIE) contacts ATP. The Mg(2+) site is built by Asp-303, Glu-316, and Asn-318.

It belongs to the D-alanine--D-alanine ligase family. It depends on Mg(2+) as a cofactor. Mn(2+) is required as a cofactor.

The protein localises to the cytoplasm. The enzyme catalyses 2 D-alanine + ATP = D-alanyl-D-alanine + ADP + phosphate + H(+). It functions in the pathway cell wall biogenesis; peptidoglycan biosynthesis. Cell wall formation. The polypeptide is D-alanine--D-alanine ligase (Coxiella burnetii (strain CbuK_Q154) (Coxiella burnetii (strain Q154))).